A 204-amino-acid polypeptide reads, in one-letter code: Tumor protein D53 (204 aa).

The disordered stretch occupies residues 1–20 (MEAQAQGLLETEPLQGTDED). Positions 22 to 73 (VASADFSSMLSEEEKEELKAELVQLEDEITTLRQVLSAKERHLVEIKQKLGM) form a coiled coil. Residues Ser-29, Ser-86, Ser-122, and Ser-131 each carry the phosphoserine modification. Omega-N-methylarginine is present on Arg-133. A Phosphothreonine modification is found at Thr-146. Phosphoserine occurs at positions 149 and 174.

The protein belongs to the TPD52 family. Forms a homodimer or heterodimer with other members of the family.

In Homo sapiens (Human), this protein is Tumor protein D53 (TPD52L1).